A 41-amino-acid polypeptide reads, in one-letter code: Large ribosomal subunit protein bL36 (41 aa).

The protein belongs to the bacterial ribosomal protein bL36 family.

This Hyphomonas neptunium (strain ATCC 15444) protein is Large ribosomal subunit protein bL36.